Here is a 455-residue protein sequence, read N- to C-terminus: Na(+)/H(+) antiporter NhaA (455 aa).

The next 11 helical transmembrane spans lie at 31-51, 83-103, 113-133, 141-161, 170-190, 198-218, 231-251, 309-329, 345-365, 383-403, and 414-434; these read ASGILLIVSTAAALVWANSPW, GLMSIFFFLVGLEIKREVLIG, FPLIAAVGGTVVPAVIYLLCV, GWGIPMATDIAFALGVLILLG, VFVTALAIVDDIIAVLVIALF, VSLLVALGGVGIAFGFNLLGI, IWAAVLKSGVHATVAGVLLAF, GLQPWVSFLIMPLFAFSNAGV, IGVALGLFLGKPLGIWLFAWL, IFGASWICGIGFTMSLFIASL, and SKIGTLAASLVAGVCGSVVLW.

This sequence belongs to the NhaA Na(+)/H(+) (TC 2.A.33) antiporter family.

Its subcellular location is the cell inner membrane. The catalysed reaction is Na(+)(in) + 2 H(+)(out) = Na(+)(out) + 2 H(+)(in). Its function is as follows. Na(+)/H(+) antiporter that extrudes sodium in exchange for external protons. The chain is Na(+)/H(+) antiporter NhaA from Koribacter versatilis (strain Ellin345).